The primary structure comprises 296 residues: Glycine N-acyltransferase-like protein (296 aa).

Lys41 bears the N6-acetyllysine; alternate mark. Lys41 is modified (N6-succinyllysine; alternate). Lys43 carries the post-translational modification N6-acetyllysine. The residue at position 48 (Lys48) is an N6-acetyllysine; alternate. The residue at position 48 (Lys48) is an N6-succinyllysine; alternate. An N6-acetyllysine mark is found at Lys80 and Lys83. Lys183 and Lys256 each carry N6-acetyllysine; alternate. N6-succinyllysine; alternate is present on residues Lys183 and Lys256.

This sequence belongs to the glycine N-acyltransferase family.

It is found in the mitochondrion. The catalysed reaction is an acyl-CoA + glycine = an N-acylglycine + CoA + H(+). In terms of biological role, mitochondrial acyltransferase which transfers the acyl group to the N-terminus of glycine. Can conjugate a multitude of substrates to form a variety of N-acylglycines. In Mus musculus (Mouse), this protein is Glycine N-acyltransferase-like protein (Gm4952).